A 620-amino-acid polypeptide reads, in one-letter code: Chaperone protein HscA homolog (620 aa).

This sequence belongs to the heat shock protein 70 family.

Chaperone involved in the maturation of iron-sulfur cluster-containing proteins. Has a low intrinsic ATPase activity which is markedly stimulated by HscB. This chain is Chaperone protein HscA homolog, found in Shewanella piezotolerans (strain WP3 / JCM 13877).